We begin with the raw amino-acid sequence, 493 residues long: Cytochrome P450 2E1 (493 aa).

298 to 303 is a substrate binding site; that stretch reads FAGTET. Cys437 is a binding site for heme.

The protein belongs to the cytochrome P450 family. As to quaternary structure, interacts with chaperones HSP70 and HSP90; this interaction is required for initial targeting to mitochondria. It depends on heme as a cofactor.

It localises to the endoplasmic reticulum membrane. Its subcellular location is the microsome membrane. The protein resides in the mitochondrion inner membrane. It catalyses the reaction an organic molecule + reduced [NADPH--hemoprotein reductase] + O2 = an alcohol + oxidized [NADPH--hemoprotein reductase] + H2O + H(+). The catalysed reaction is (5Z,8Z,11Z)-eicosatrienoate + reduced [NADPH--hemoprotein reductase] + O2 = 19-hydroxy-(5Z,8Z,11Z)-eicosatrienoate + oxidized [NADPH--hemoprotein reductase] + H2O + H(+). The enzyme catalyses (5Z,8Z,11Z,14Z,17Z)-eicosapentaenoate + reduced [NADPH--hemoprotein reductase] + O2 = 19-hydroxy-(5Z,8Z,11Z,14Z,17Z)-eicosapentaenoate + oxidized [NADPH--hemoprotein reductase] + H2O + H(+). It carries out the reaction (4Z,7Z,10Z,13Z,16Z,19Z)-docosahexaenoate + reduced [NADPH--hemoprotein reductase] + O2 = 21-hydroxy-(4Z,7Z,10Z,13Z,16Z,19Z)-docosahexaenoate + oxidized [NADPH--hemoprotein reductase] + H2O + H(+). It catalyses the reaction dodecanoate + reduced [NADPH--hemoprotein reductase] + O2 = 11-hydroxydodecanoate + oxidized [NADPH--hemoprotein reductase] + H2O + H(+). The catalysed reaction is tetradecanoate + reduced [NADPH--hemoprotein reductase] + O2 = 13-hydroxytetradecanoate + oxidized [NADPH--hemoprotein reductase] + H2O + H(+). The enzyme catalyses 4-nitrophenol + NADPH + O2 + H(+) = 4-nitrocatechol + NADP(+) + H2O. The protein operates within lipid metabolism; fatty acid metabolism. Its activity is regulated as follows. The omega-1 hydroxylase activity is stimulated by cytochrome b5. A cytochrome P450 monooxygenase involved in the metabolism of fatty acids. Mechanistically, uses molecular oxygen inserting one oxygen atom into a substrate, and reducing the second into a water molecule, with two electrons provided by NADPH via cytochrome P450 reductase (NADPH--hemoprotein reductase). Catalyzes the hydroxylation of carbon-hydrogen bonds. Hydroxylates fatty acids specifically at the omega-1 position displaying the highest catalytic activity for saturated fatty acids. May be involved in the oxidative metabolism of xenobiotics. The protein is Cytochrome P450 2E1 (CYP2E1) of Macaca mulatta (Rhesus macaque).